The following is a 150-amino-acid chain: 6,7-dimethyl-8-ribityllumazine synthase (150 aa).

Residues F11, T43–E45, and A67–I69 contribute to the 5-amino-6-(D-ribitylamino)uracil site. A72 to T73 provides a ligand contact to (2S)-2-hydroxy-3-oxobutyl phosphate. The active-site Proton donor is H75. L100 serves as a coordination point for 5-amino-6-(D-ribitylamino)uracil. Residue R115 coordinates (2S)-2-hydroxy-3-oxobutyl phosphate.

This sequence belongs to the DMRL synthase family.

It carries out the reaction (2S)-2-hydroxy-3-oxobutyl phosphate + 5-amino-6-(D-ribitylamino)uracil = 6,7-dimethyl-8-(1-D-ribityl)lumazine + phosphate + 2 H2O + H(+). It functions in the pathway cofactor biosynthesis; riboflavin biosynthesis; riboflavin from 2-hydroxy-3-oxobutyl phosphate and 5-amino-6-(D-ribitylamino)uracil: step 1/2. Its function is as follows. Catalyzes the formation of 6,7-dimethyl-8-ribityllumazine by condensation of 5-amino-6-(D-ribitylamino)uracil with 3,4-dihydroxy-2-butanone 4-phosphate. This is the penultimate step in the biosynthesis of riboflavin. This Staphylothermus marinus (strain ATCC 43588 / DSM 3639 / JCM 9404 / F1) protein is 6,7-dimethyl-8-ribityllumazine synthase.